Reading from the N-terminus, the 206-residue chain is Large ribosomal subunit protein uL4 (206 aa).

Belongs to the universal ribosomal protein uL4 family. Part of the 50S ribosomal subunit.

In terms of biological role, one of the primary rRNA binding proteins, this protein initially binds near the 5'-end of the 23S rRNA. It is important during the early stages of 50S assembly. It makes multiple contacts with different domains of the 23S rRNA in the assembled 50S subunit and ribosome. Its function is as follows. Forms part of the polypeptide exit tunnel. In Desulfatibacillum aliphaticivorans, this protein is Large ribosomal subunit protein uL4.